The sequence spans 157 residues: Endoribonuclease YbeY (157 aa).

Zn(2+) contacts are provided by His-122, His-126, and His-132.

The protein belongs to the endoribonuclease YbeY family. Zn(2+) serves as cofactor.

The protein localises to the cytoplasm. Its function is as follows. Single strand-specific metallo-endoribonuclease involved in late-stage 70S ribosome quality control and in maturation of the 3' terminus of the 16S rRNA. This is Endoribonuclease YbeY from Bacillus velezensis (strain DSM 23117 / BGSC 10A6 / LMG 26770 / FZB42) (Bacillus amyloliquefaciens subsp. plantarum).